A 1221-amino-acid polypeptide reads, in one-letter code: Phosphoenolpyruvate carboxylase 2 (1221 aa).

H156 is an active-site residue. 2 disordered regions span residues 443-588 and 642-661; these read TAAE…DPTF and REPA…GGGG. 2 stretches are compositionally biased toward low complexity: residues 503 to 513 and 550 to 564; these read TTTATAAAAAA and PFRE…TAAS. Gly residues-rich tracts occupy residues 565–575 and 648–661; these read GGAGGGGGGGA and AHGG…GGGG. The active site involves K886.

This sequence belongs to the PEPCase type 1 family. It depends on Mg(2+) as a cofactor.

It is found in the cytoplasm. It carries out the reaction oxaloacetate + phosphate = phosphoenolpyruvate + hydrogencarbonate. In terms of biological role, through the carboxylation of phosphoenolpyruvate (PEP) it forms oxaloacetate, a four-carbon dicarboxylic acid source for the tricarboxylic acid cycle. This chain is Phosphoenolpyruvate carboxylase 2, found in Chlamydomonas reinhardtii (Chlamydomonas smithii).